A 782-amino-acid polypeptide reads, in one-letter code: General transcription and DNA repair factor IIH helicase/translocase subunit XPB (782 aa).

The span at 1–11 shows a compositional bias: basic and acidic residues; it reads MGKRDRADRDK. Disordered stretches follow at residues 1 to 51 and 220 to 240; these read MGKR…ESGT and ISKT…DPQG. The Nuclear localization signal signature appears at 6–18; it reads RADRDKKKSRKRH. The span at 21-30 shows a compositional bias: acidic residues; it reads DEEDDEEDAP. One can recognise a Helicase ATP-binding domain in the interval 327–488; that stretch reads MFGNGRARSG…DLNFLIGPKL (162 aa). 340–347 provides a ligand contact to ATP; the sequence is LPCGAGKS. The DEVH box signature appears at 441 to 444; the sequence is DEVH. Residues 542–702 enclose the Helicase C-terminal domain; it reads RACQFLIKFH…LAGMEEEDLA (161 aa). A Phosphoserine modification is found at Ser686. A Phosphoserine; by CK2 modification is found at Ser751.

Belongs to the helicase family. RAD25/XPB subfamily. In terms of assembly, component of the 7-subunit TFIIH core complex composed of XPB/ERCC3, XPD/ERCC2, GTF2H1, GTF2H2, GTF2H3, GTF2H4 and GTF2H5, which is active in NER. The core complex associates with the 3-subunit CDK-activating kinase (CAK) module composed of CCNH/cyclin H, CDK7 and MNAT1 to form the 10-subunit holoenzyme (holo-TFIIH) active in transcription. Interacts with PUF60. Interacts with ATF7IP. Interacts with KAT2A; leading to KAT2A recruitment to promoters and acetylation of histones. Part of TBP-based Pol II pre-initiation complex (PIC), in which Pol II core assembles with general transcription factors and other specific initiation factors including GTF2E1, GTF2E2, GTF2F1, GTF2F2, TCEA1, ERCC2, ERCC3, GTF2H2, GTF2H3, GTF2H4, GTF2H5, GTF2A1, GTF2A2, GTF2B and TBP; this large multi-subunit PIC complex mediates DNA unwinding and targets Pol II core to the transcription start site where the first phosphodiester bond forms. In terms of processing, phosphorylation on Ser-751 by CK2 controls the 5'-excision activity of ERCC1-XPF endonuclease; phosphorylated protein inhibits the excision activity and thus NER. Dephosphorylation reactivates the 5'-excision step. Phosphorylation has no effect on transcription or the 3'-5' helicase activity.

Its subcellular location is the nucleus. It catalyses the reaction Couples ATP hydrolysis with the unwinding of duplex DNA by translocating in the 3'-5' direction.. The catalysed reaction is ATP + H2O = ADP + phosphate + H(+). Its activity is regulated as follows. Phosphorylation on Ser-751 by CK2 controls the 5'-excision activity of ERCC1-XPF endonuclease; phosphorylated protein inhibits the excision activity and thus NER. ATPase activity is stimulated by TFIIH subunit p52 (GTF2H4). DNA translocase activity by this subunit in TFIIH is stimulated by XPA, ERCC5/XPG and XFP plus ERCC1. ATP-dependent 3'-5' DNA helicase/translocase; binds dsDNA rather than ssDNA, unzipping it in a translocase rather than classical helicase activity. Component of the general transcription and DNA repair factor IIH (TFIIH) core complex. When complexed to CDK-activating kinase (CAK), involved in RNA transcription by RNA polymerase II. The ATPase activity of XPB/ERCC3, but not its helicase activity, is required for DNA opening; it may wrap around the damaged DNA wedging it open, causing localized melting and twisting that allows XPD/ERCC2 helicase to anchor. The ATP-dependent helicase activity of XPB/ERCC3 may be required for promoter escape. Also involved in transcription-coupled nucleotide excision repair (NER) of damaged DNA. In NER, TFIIH acts by opening DNA around the lesion to allow the excision of the damaged oligonucleotide and its replacement by a new DNA fragment. The structure of the TFIIH transcription complex differs from the NER-TFIIH complex; large movements by XPD/ERCC2 and XPB/ERCC3 are stabilized by XPA. The polypeptide is General transcription and DNA repair factor IIH helicase/translocase subunit XPB (ERCC3) (Macaca fascicularis (Crab-eating macaque)).